Consider the following 133-residue polypeptide: Ubiquitin-like FUBI-ribosomal protein eS30 fusion protein (133 aa).

The segment at 84–110 is disordered; it reads GKVRGQTPKVAKQEKKKKKTGRAKRRM. Over residues 97–110 the composition is skewed to basic residues; that stretch reads EKKKKKTGRAKRRM. Lysine 125 is modified (N6-succinyllysine).

In the N-terminal section; belongs to the ubiquitin family. It in the C-terminal section; belongs to the eukaryotic ribosomal protein eS30 family. In terms of assembly, component of the 40S subunit of the ribosome. Post-translationally, FUBI is cleaved from ribosomal protein S30 by the deubiquitinase USP36 before the assembly of ribosomal protein S30 into pre-40S ribosomal particles. FUBI removal from ribosomal protein S30 is a crucial event for the final maturation of pre-40S particles.

It localises to the nucleus. It is found in the cytoplasm. Its function is as follows. May have pro-apoptotic activity. Functionally, component of the 40S subunit of the ribosome. Contributes to the assembly and function of 40S ribosomal subunits. The sequence is that of Ubiquitin-like FUBI-ribosomal protein eS30 fusion protein (Fau) from Mus musculus (Mouse).